We begin with the raw amino-acid sequence, 690 residues long: Probable serine/threonine-protein kinase drkB (690 aa).

The N-terminal stretch at 1–24 (MKVQIVFFSITVFIFVLFLLSVES) is a signal peptide. The segment at 51-110 (DSKSSEHTTSSSSSSNSKNKGDSSSSSSNSGSSSNSIISGDSNSKDAPTTSSDSLSPATP) is disordered. The span at 57 to 96 (HTTSSSSSSNSKNKGDSSSSSSNSGSSSNSIISGDSNSKD) shows a compositional bias: low complexity. Residues 97-107 (APTTSSDSLSP) show a composition bias toward polar residues. 4 N-linked (GlcNAc...) asparagine glycosylation sites follow: Asn-134, Asn-180, Asn-220, and Asn-250. The interval 287–335 (TITPTPTITPTPTITPTVTPTATPSTTPSTTPTTTPSTPTPTPTKSPYS) is disordered. The segment covering 296–323 (PTPTITPTVTPTATPSTTPSTTPTTTPS) has biased composition (low complexity). A helical membrane pass occupies residues 346 to 366 (IIIASSITGGLLISIFSFVFI). In terms of domain architecture, Protein kinase spans 391–644 (IKIGVRIGKG…EQCLEILESI (254 aa)). ATP contacts are provided by residues 397 to 405 (IGKGNFGEV) and Lys-418. Asp-514 serves as the catalytic Proton acceptor. Residues 649–690 (FDDIPVNNNNNNNSNNNENNNENNNNSDNNNNDINYSNRVIN) form a disordered region. A compositionally biased stretch (low complexity) spans 655–681 (NNNNNNNSNNNENNNENNNNSDNNNND).

It belongs to the protein kinase superfamily. TKL Ser/Thr protein kinase family.

The protein localises to the membrane. It catalyses the reaction L-seryl-[protein] + ATP = O-phospho-L-seryl-[protein] + ADP + H(+). The enzyme catalyses L-threonyl-[protein] + ATP = O-phospho-L-threonyl-[protein] + ADP + H(+). This Dictyostelium discoideum (Social amoeba) protein is Probable serine/threonine-protein kinase drkB (drkB).